The sequence spans 132 residues: Aspartate 1-decarboxylase (132 aa).

Ser-25 acts as the Schiff-base intermediate with substrate; via pyruvic acid in catalysis. At Ser-25 the chain carries Pyruvic acid (Ser). Position 57 (Thr-57) interacts with substrate. Catalysis depends on Tyr-58, which acts as the Proton donor. Substrate is bound at residue 73 to 75 (GAA).

Belongs to the PanD family. In terms of assembly, heterooctamer of four alpha and four beta subunits. Pyruvate is required as a cofactor. In terms of processing, is synthesized initially as an inactive proenzyme, which is activated by self-cleavage at a specific serine bond to produce a beta-subunit with a hydroxyl group at its C-terminus and an alpha-subunit with a pyruvoyl group at its N-terminus.

Its subcellular location is the cytoplasm. The enzyme catalyses L-aspartate + H(+) = beta-alanine + CO2. The protein operates within cofactor biosynthesis; (R)-pantothenate biosynthesis; beta-alanine from L-aspartate: step 1/1. Functionally, catalyzes the pyruvoyl-dependent decarboxylation of aspartate to produce beta-alanine. The chain is Aspartate 1-decarboxylase from Pelotomaculum thermopropionicum (strain DSM 13744 / JCM 10971 / SI).